Consider the following 85-residue polypeptide: U4-theraphotoxin-Hhn1a (85 aa).

Residues 1–22 (MKVTLIAILTCAAVLVLHTTAA) form the signal peptide. Positions 23 to 48 (EEFEAESQLMEVGMPDTELAAVDEER) are excised as a propeptide. 3 disulfides stabilise this stretch: Cys-52–Cys-66, Cys-56–Cys-77, and Cys-71–Cys-82.

Belongs to the neurotoxin 12 (Hwtx-2) family. 02 (Hwtx-2) subfamily. Monomer. Expressed by the venom gland.

The protein resides in the secreted. Functionally, neurotoxin active on both insects and mammals. This Cyriopagopus hainanus (Chinese bird spider) protein is U4-theraphotoxin-Hhn1a.